Reading from the N-terminus, the 188-residue chain is UPF0340 protein GK3370 (188 aa).

Belongs to the UPF0340 family.

The chain is UPF0340 protein GK3370 from Geobacillus kaustophilus (strain HTA426).